Here is a 302-residue protein sequence, read N- to C-terminus: tRNA pseudouridine synthase B (302 aa).

The Nucleophile role is filled by Asp-45.

The protein belongs to the pseudouridine synthase TruB family. Type 1 subfamily.

The catalysed reaction is uridine(55) in tRNA = pseudouridine(55) in tRNA. Its function is as follows. Responsible for synthesis of pseudouridine from uracil-55 in the psi GC loop of transfer RNAs. This chain is tRNA pseudouridine synthase B, found in Francisella philomiragia subsp. philomiragia (strain ATCC 25017 / CCUG 19701 / FSC 153 / O#319-036).